The chain runs to 113 residues: Pro-FMRFamide-related neuropeptide FF (113 aa).

Residues 1 to 20 (MDSRQAAALLVLLLLIDGGC) form the signal peptide. Residues 21 to 65 (AEGPGGQQEDQLSAEEDSEPLPPQDAQTSGSLLHYLLQAMERPGR) constitute a propeptide that is removed on maturation. The interval 22–48 (EGPGGQQEDQLSAEEDSEPLPPQDAQT) is disordered. Phenylalanine amide is present on phenylalanine 76. Positions 79-92 (NTQGSWRNEWLSPR) are excised as a propeptide. Position 110 is a phenylalanine amide (phenylalanine 110).

The protein belongs to the FARP (FMRFamide related peptide) family.

It is found in the secreted. Functionally, morphine modulating peptides. Have wide-ranging physiologic effects, including the modulation of morphine-induced analgesia, elevation of arterial blood pressure, and increased somatostatin secretion from the pancreas. Neuropeptide FF potentiates and sensitizes ASIC1 and ASIC3 channels. In Homo sapiens (Human), this protein is Pro-FMRFamide-related neuropeptide FF.